Here is a 410-residue protein sequence, read N- to C-terminus: MTPDSCPVRPEPTLSFTQGLIVGQISVVFLIAAFIKFFIFGDPPSAEETASLRASERRSRTLAHKKSLLSLRTSNQRPGSQQQQSVLNRKKSSILRSGPPSLTIGSILNKTYYRVESHQPESLDWFNVLVAQTIAQFRSDAQHDDAILTSLTKALNGTSRPSFLDEIRVTELSLGEDFPIFSNCRIIPVDEDGLDFGPGKAFDANMATRDGGTLQARMDVDLSDMITLALETKLLLNYPKKLTAVLPVALAVSVVRFSGTLAISFIPSNPSQSTPTKMVFNFLDDYRLDFSIRSLVGSRSRLQDVPKIAQLVESRLHRWFDERCVEPRFQEIPLPSMWPRKKNARGGDDAIADVERSMSKAKGADVARDLRREVLVEAEARQAAQRDSLRYRRPRADDAFPMPGSLAVDD.

Residues 1–19 (MTPDSCPVRPEPTLSFTQG) are Lumenal-facing. The chain crosses the membrane as a helical span at residues 20 to 40 (LIVGQISVVFLIAAFIKFFIF). Residues 41 to 410 (GDPPSAEETA…PMPGSLAVDD (370 aa)) are Cytoplasmic-facing. The span at 71-87 (LRTSNQRPGSQQQQSVL) shows a compositional bias: polar residues. The interval 71 to 98 (LRTSNQRPGSQQQQSVLNRKKSSILRSG) is disordered. In terms of domain architecture, SMP-LTD spans 119–335 (QPESLDWFNV…EPRFQEIPLP (217 aa)). A disordered region spans residues 380-410 (ARQAAQRDSLRYRRPRADDAFPMPGSLAVDD). Positions 387-398 (DSLRYRRPRADD) are enriched in basic and acidic residues.

The protein belongs to the MMM1 family. Homodimer. Component of the ER-mitochondria encounter structure (ERMES) or MDM complex, composed of MMM1, MDM10, MDM12 and MDM34. An MMM1 homodimer associates with one molecule of MDM12 on each side in a pairwise head-to-tail manner, and the SMP-LTD domains of MMM1 and MDM12 generate a continuous hydrophobic tunnel for phospholipid trafficking.

It is found in the endoplasmic reticulum membrane. Functionally, component of the ERMES/MDM complex, which serves as a molecular tether to connect the endoplasmic reticulum (ER) and mitochondria. Components of this complex are involved in the control of mitochondrial shape and protein biogenesis, and function in nonvesicular lipid trafficking between the ER and mitochondria. The MDM12-MMM1 subcomplex functions in the major beta-barrel assembly pathway that is responsible for biogenesis of all outer membrane beta-barrel proteins, and acts in a late step after the SAM complex. The MDM10-MDM12-MMM1 subcomplex further acts in the TOM40-specific pathway after the action of the MDM12-MMM1 complex. Essential for establishing and maintaining the structure of mitochondria and maintenance of mtDNA nucleoids. The sequence is that of Maintenance of mitochondrial morphology protein 1 from Pyricularia oryzae (strain 70-15 / ATCC MYA-4617 / FGSC 8958) (Rice blast fungus).